The sequence spans 504 residues: Endochitinase (504 aa).

Residues 1 to 22 (MNRTTLILFFIILSNTITVIHG) form the signal peptide. The GH18 domain maps to 23 to 392 (YVRGCYYTNW…NAISSELEGE (370 aa)). The cysteines at positions 27 and 52 are disulfide-linked. Chitin is bound by residues 78–79 (TE) and 105–108 (GGYN). Glu-148 serves as the catalytic Proton donor. Residues Tyr-149, 212 to 215 (MSYD), and Trp-362 contribute to the chitin site. The tract at residues 389–450 (LEGESENPEI…YDTDETEGQE (62 aa)) is disordered. Over residues 396-408 (PEITTEEPSITET) the composition is skewed to low complexity. A run of 2 repeats spans residues 407-420 (ETEAYETDETEETS) and 421-434 (ETEAYDTDETEETS). A 3 X 14 AA approximate tandem repeats of E-T-E-A-Y-[ED]-T-D-E-T-E-E-T-S region spans residues 407-448 (ETEAYETDETEETSETEAYDTDETEETSETEATTYDTDETEG). A compositionally biased stretch (acidic residues) spans 409–435 (EAYETDETEETSETEAYDTDETEETSE). The stretch at 435–448 (ETEATTYDTDETEG) is one 3; approximate repeat. The region spanning 448–504 (GQECPERDGLFPHPTDCHLFIQCANNIAYVMQCPATTFFNDAIKVCDHMTNAPDTCI) is the Chitin-binding type-2 domain. The cysteines at positions 480 and 493 are disulfide-linked.

Belongs to the glycosyl hydrolase 18 family. Chitinase class II subfamily. O-glycosylated.

It catalyses the reaction Random endo-hydrolysis of N-acetyl-beta-D-glucosaminide (1-&gt;4)-beta-linkages in chitin and chitodextrins.. Functionally, microfilarial chitinase, which may function to degrade chitin-containing structures in the micro-filaria or in its mosquito vector during parasite development and transmission. The chain is Endochitinase from Brugia malayi (Filarial nematode worm).